A 90-amino-acid chain; its full sequence is MAVKIRLTRMGSKKKPFYRINVADSRAPRDGRFIETVGTYNPLVAENQVTIKEERVLEWLSKGAQPSDTVRNLLSKAGVMTKFHDQKFSK.

The protein belongs to the bacterial ribosomal protein bS16 family.

In Streptococcus agalactiae serotype III (strain NEM316), this protein is Small ribosomal subunit protein bS16.